Consider the following 178-residue polypeptide: CDP-archaeol synthase (178 aa).

The next 5 membrane-spanning stretches (helical) occupy residues 3 to 23, 55 to 75, 91 to 111, 125 to 145, and 149 to 169; these read IIYLVINSFIFILPAYVANAT, TFFGLFCGTITAILEGIIFNL, GIVGLLLSAGALFGDAIGSFI, ILDQLGFIVFALLFVYPFAPV, and MGIFLLVITPMIHLSANIIAY.

This sequence belongs to the CDP-archaeol synthase family. Mg(2+) serves as cofactor.

It localises to the cell membrane. It catalyses the reaction 2,3-bis-O-(geranylgeranyl)-sn-glycerol 1-phosphate + CTP + H(+) = CDP-2,3-bis-O-(geranylgeranyl)-sn-glycerol + diphosphate. Its pathway is membrane lipid metabolism; glycerophospholipid metabolism. In terms of biological role, catalyzes the formation of CDP-2,3-bis-(O-geranylgeranyl)-sn-glycerol (CDP-archaeol) from 2,3-bis-(O-geranylgeranyl)-sn-glycerol 1-phosphate (DGGGP) and CTP. This reaction is the third ether-bond-formation step in the biosynthesis of archaeal membrane lipids. This is CDP-archaeol synthase from Methanococcus aeolicus (strain ATCC BAA-1280 / DSM 17508 / OCM 812 / Nankai-3).